The sequence spans 105 residues: Thioredoxin (105 aa).

The region spanning 2-105 is the Thioredoxin domain; it reads VKLIESKEAF…KLEATITEFA (104 aa). Lys3 is subject to N6-acetyllysine. Position 8 is an N6-succinyllysine (Lys8). Catalysis depends on nucleophile residues Cys32 and Cys35. Cys32 and Cys35 are oxidised to a cystine. The residue at position 39 (Lys39) is an N6-acetyllysine. 2 positions are modified to S-nitrosocysteine: Cys62 and Cys69. At Cys73 the chain carries S-nitrosocysteine; alternate. Lys94 is subject to N6-acetyllysine; alternate. N6-succinyllysine; alternate is present on Lys94.

Belongs to the thioredoxin family. In terms of assembly, homodimer; disulfide-linked. Interacts with TXNIP through the redox-active site. Interacts with MAP3K5 and CASP3. Interacts with APEX1; the interaction stimulates the FOS/JUN AP-1 DNA-binding activity in a redox-dependent manner. In terms of processing, in the fully reduced protein, both Cys-69 and Cys-73 are nitrosylated in response to nitric oxide (NO). When two disulfide bonds are present in the protein, only Cys-73 is nitrosylated. Cys-73 can serve as donor for nitrosylation of target proteins.

The protein resides in the nucleus. Its subcellular location is the cytoplasm. The protein localises to the secreted. Functionally, participates in various redox reactions through the reversible oxidation of its active center dithiol to a disulfide and catalyzes dithiol-disulfide exchange reactions. Plays a role in the reversible S-nitrosylation of cysteine residues in target proteins, and thereby contributes to the response to intracellular nitric oxide. Nitrosylates the active site Cys of CASP3 in response to nitric oxide (NO), and thereby inhibits caspase-3 activity. Induces the FOS/JUN AP-1 DNA binding activity in ionizing radiation (IR) cells through its oxidation/reduction status and stimulates AP-1 transcriptional activity. This Rattus norvegicus (Rat) protein is Thioredoxin (Txn).